We begin with the raw amino-acid sequence, 275 residues long: Ribosomal RNA small subunit methyltransferase A (275 aa).

Asparagine 28, leucine 30, glycine 55, glutamate 77, aspartate 103, and asparagine 123 together coordinate S-adenosyl-L-methionine.

Belongs to the class I-like SAM-binding methyltransferase superfamily. rRNA adenine N(6)-methyltransferase family. RsmA subfamily.

It localises to the cytoplasm. The catalysed reaction is adenosine(1518)/adenosine(1519) in 16S rRNA + 4 S-adenosyl-L-methionine = N(6)-dimethyladenosine(1518)/N(6)-dimethyladenosine(1519) in 16S rRNA + 4 S-adenosyl-L-homocysteine + 4 H(+). In terms of biological role, specifically dimethylates two adjacent adenosines (A1518 and A1519) in the loop of a conserved hairpin near the 3'-end of 16S rRNA in the 30S particle. May play a critical role in biogenesis of 30S subunits. The polypeptide is Ribosomal RNA small subunit methyltransferase A (Rhizobium johnstonii (strain DSM 114642 / LMG 32736 / 3841) (Rhizobium leguminosarum bv. viciae)).